Consider the following 99-residue polypeptide: Protein adenylyltransferase MntA (99 aa).

The short motif at 33-47 (GSYVRGEAKEDSDVD) is the GSX(10)DXD motif element. Catalysis depends on residues Asp-45 and Asp-47. Positions 45, 47, and 77 each coordinate Mg(2+).

Belongs to the MntA antitoxin family. It depends on Mg(2+) as a cofactor.

It carries out the reaction L-tyrosyl-[protein] + ATP = O-(5'-adenylyl)-L-tyrosyl-[protein] + diphosphate. The catalysed reaction is O-(5'-adenylyl)-L-tyrosyl-[protein] + ATP = O-[5'-(adenylyl-(5'-&gt;3')-adenylyl)]-L-tyrosyl-[protein] + diphosphate. Its function is as follows. Antitoxin component of a type VII toxin-antitoxin (TA) system. Overexpression in E.coli neutralizes the toxic effect of cognate toxin HepT. Neutralization is mostly due to AMPylation of the toxin by this enzyme. This chain is Protein adenylyltransferase MntA, found in Thermococcus cleftensis (strain DSM 27260 / KACC 17922 / CL1).